The following is a 731-amino-acid chain: NADH-ubiquinone oxidoreductase 75 kDa subunit, mitochondrial (731 aa).

The N-terminal 27 residues, 1–27 (MIRAPLVKALGALGSPTHQMASRAVRT), are a transit peptide targeting the mitochondrion. Positions 40-118 (EKIEVFVDDI…GWRIKTNSDL (79 aa)) constitute a 2Fe-2S ferredoxin-type domain. Positions 74, 85, 88, and 102 each coordinate [2Fe-2S] cluster. The region spanning 118–157 (LTRKAREGVMEFLLMNHPLDCPICDQGGECDLQDQAMAFG) is the 4Fe-4S His(Cys)3-ligated-type domain. His-134, Cys-138, Cys-141, Cys-147, Cys-190, Cys-193, Cys-196, and Cys-240 together coordinate [4Fe-4S] cluster. In terms of domain architecture, 4Fe-4S Mo/W bis-MGD-type spans 259-315 (IRKVSSIDVLDAVGSNIVVSTRTNEVLRILPRENEDVNEEWLADKSRFACDGLKRQR).

This sequence belongs to the complex I 75 kDa subunit family. Complex I is composed of about 45 different subunits. [2Fe-2S] cluster is required as a cofactor. The cofactor is [4Fe-4S] cluster.

Its subcellular location is the mitochondrion inner membrane. It carries out the reaction a ubiquinone + NADH + 5 H(+)(in) = a ubiquinol + NAD(+) + 4 H(+)(out). Its function is as follows. Core subunit of the mitochondrial membrane respiratory chain NADH dehydrogenase (Complex I) that is believed to belong to the minimal assembly required for catalysis. Complex I functions in the transfer of electrons from NADH to the respiratory chain. The immediate electron acceptor for the enzyme is believed to be ubiquinone. This is the largest subunit of complex I and it is a component of the iron-sulfur (IP) fragment of the enzyme. It may form part of the active site crevice where NADH is oxidized. The chain is NADH-ubiquinone oxidoreductase 75 kDa subunit, mitochondrial from Drosophila melanogaster (Fruit fly).